The primary structure comprises 428 residues: Protein ECERIFERUM 26 (428 aa).

The tract at residues 1–36 (MGRSQEQGQGQGPVHSIRLSTVGATRPTETGTTHEP) is disordered. The segment covering 21 to 36 (TVGATRPTETGTTHEP) has biased composition (low complexity).

This sequence belongs to the plant acyltransferase family. As to expression, highly expressed in leaves.

It localises to the cytoplasm. Its subcellular location is the cytosol. In terms of biological role, involved in biosynthesis of the epicuticular wax. Plays a role in very-long-chain fatty acid (VLCFA) biosynthesis and is required for C30 fatty acid elongation in leaf. Despite its classification as a BAHD acyltransferase based on sequence homology, CER26 does not seem to share the catalytic mechanism of the members of the BAHD family. The sequence is that of Protein ECERIFERUM 26 (CER26) from Arabidopsis thaliana (Mouse-ear cress).